We begin with the raw amino-acid sequence, 277 residues long: Large ribosomal subunit protein uL2 (277 aa).

Positions 219–277 are disordered; sequence TVRGSVMNPNDHPHGGGEGKAPVGRKAPSTPWGKPALGLKTRNKKAKSDKLIVRRRNEK. A compositionally biased stretch (basic and acidic residues) spans 264-277; the sequence is AKSDKLIVRRRNEK.

This sequence belongs to the universal ribosomal protein uL2 family. Part of the 50S ribosomal subunit. Forms a bridge to the 30S subunit in the 70S ribosome.

Its function is as follows. One of the primary rRNA binding proteins. Required for association of the 30S and 50S subunits to form the 70S ribosome, for tRNA binding and peptide bond formation. It has been suggested to have peptidyltransferase activity; this is somewhat controversial. Makes several contacts with the 16S rRNA in the 70S ribosome. This chain is Large ribosomal subunit protein uL2, found in Streptococcus pyogenes serotype M1.